The following is a 438-amino-acid chain: Na(+)/H(+) antiporter NhaA (438 aa).

11 consecutive transmembrane segments (helical) span residues 23–43, 62–82, 104–124, 133–153, 162–182, 185–205, 221–241, 302–322, 337–357, 372–392, and 410–430; these read FGGI…NSFL, FFIG…LFFL, SFPV…YFFL, GFGI…MLLG, VFLI…IALF, TNLK…LALL, VLLW…AVVL, FLAP…NAGV, FGVI…ITFI, WWHI…SMFI, and IAIL…LFAL.

The protein belongs to the NhaA Na(+)/H(+) (TC 2.A.33) antiporter family.

Its subcellular location is the cell inner membrane. It catalyses the reaction Na(+)(in) + 2 H(+)(out) = Na(+)(out) + 2 H(+)(in). Na(+)/H(+) antiporter that extrudes sodium in exchange for external protons. The polypeptide is Na(+)/H(+) antiporter NhaA (Helicobacter pylori (strain P12)).